A 92-amino-acid polypeptide reads, in one-letter code: Small ribosomal subunit protein uS15c (92 aa).

The protein belongs to the universal ribosomal protein uS15 family. In terms of assembly, part of the 30S ribosomal subunit.

Its subcellular location is the plastid. It localises to the chloroplast. In Lemna minor (Common duckweed), this protein is Small ribosomal subunit protein uS15c (rps15-A).